We begin with the raw amino-acid sequence, 373 residues long: Muscleblind-like protein 2 (373 aa).

4 C3H1-type zinc fingers span residues Trp-13 to Lys-41, Asn-47 to Thr-73, Thr-176 to Asp-204, and Asp-212 to Ala-238.

Belongs to the muscleblind family. As to quaternary structure, interacts with ITGA3. Expressed in heart, brain, placenta, lung, liver, skeletal muscle, kidney and pancreas.

It is found in the nucleus. The protein resides in the cytoplasm. Functionally, mediates pre-mRNA alternative splicing regulation. Acts either as activator or repressor of splicing on specific pre-mRNA targets. Inhibits cardiac troponin-T (TNNT2) pre-mRNA exon inclusion but induces insulin receptor (IR) pre-mRNA exon inclusion in muscle. Antagonizes the alternative splicing activity pattern of CELF proteins. RNA-binding protein that binds to 5'ACACCC-3' core sequence, termed zipcode, within the 3'UTR of ITGA3. Binds to CUG triplet repeat expansion in myotonic dystrophy muscle cells by sequestering the target RNAs. Together with RNA binding proteins RBPMS and RBFOX2, activates vascular smooth muscle cells alternative splicing events. Regulates NCOR2 alternative splicing. Seems to regulate expression and localization of ITGA3 by transporting it from the nucleus to cytoplasm at adhesion plaques. May play a role in myotonic dystrophy pathophysiology (DM). The sequence is that of Muscleblind-like protein 2 (MBNL2) from Homo sapiens (Human).